A 230-amino-acid polypeptide reads, in one-letter code: MERRRGTVPLGWVFFVLCLSASSPCAVDLGSKSSNSTCRLNVTELASIHPGETWTLHGMCISICYYENVTEDEIIGVAFTWQHNESVVDLWLYQNDTVIRNFSDITTNILQDGLKMRTVPVTKLYTSRMVTNLTVGRYDCLRCENGTMKIIERLYVRLGSLYPRPPGSGLAKHPSVSADEELSATLARDIVLVSAITLFFFLLALRIPQRLCQRLRIRLPHRYQRLRTED.

Positions 1–21 (MERRRGTVPLGWVFFVLCLSA) are cleaved as a signal peptide. At 22 to 184 (SSPCAVDLGS…SVSADEELSA (163 aa)) the chain is on the extracellular side. N-linked (GlcNAc...) asparagine; by host glycans are attached at residues N35, N41, N68, N84, N95, N101, N132, and N145. Residues 185–205 (TLARDIVLVSAITLFFFLLAL) form a helical membrane-spanning segment. At 206–230 (RIPQRLCQRLRIRLPHRYQRLRTED) the chain is on the cytoplasmic side.

It belongs to the HHV-5 UL16 protein family. As to quaternary structure, interacts with host ULBP1, ULBP2 and MICB.

The protein resides in the host membrane. Plays a role in the escape of host immune response. Blocks the interaction between the host KLRK1 receptor with their ligand ULBP1 and ULBP2. ULBPs activate multiple signaling pathways in primary NK cells, resulting in the production of cytokines and chemokines. Therefore, the sequestration of diverse KLRK1 ligands in the endoplasmic reticulum and cis-Golgi apparatus of cells by UL16 inhibits the activation of NK cells. The chain is Protein UL16 (UL16) from Homo sapiens (Human).